We begin with the raw amino-acid sequence, 214 residues long: Cdc42 effector protein 2 (214 aa).

Ser-2 carries the post-translational modification N-acetylserine. A CRIB domain is found at 30–44 (ISPPLGDFRHTIHIG). 5 positions are modified to phosphoserine: Ser-31, Ser-101, Ser-137, Ser-141, and Ser-145. Residues 119–177 (LTLPTAQAPPKPPRLHLESPQPSPQPSPQGAGNVDVWRIPEAGSPHNGMSPEPEAEEPF) are disordered.

The protein belongs to the BORG/CEP family. In terms of assembly, interacts with CDC42 and RHOQ in a GTP-dependent manner, and with SEPT7.

It localises to the endomembrane system. It is found in the cytoplasm. Its subcellular location is the cytoskeleton. Its function is as follows. Probably involved in the organization of the actin cytoskeleton. May act downstream of CDC42 to induce actin filament assembly leading to cell shape changes. Induces pseudopodia formation in fibroblasts in a CDC42-dependent manner. This chain is Cdc42 effector protein 2 (Cdc42ep2), found in Mus musculus (Mouse).